The primary structure comprises 469 residues: UDP-N-acetylmuramate--L-alanine ligase (469 aa).

112–118 provides a ligand contact to ATP; the sequence is GTHGKTT.

This sequence belongs to the MurCDEF family.

The protein localises to the cytoplasm. It catalyses the reaction UDP-N-acetyl-alpha-D-muramate + L-alanine + ATP = UDP-N-acetyl-alpha-D-muramoyl-L-alanine + ADP + phosphate + H(+). It participates in cell wall biogenesis; peptidoglycan biosynthesis. Its function is as follows. Cell wall formation. The sequence is that of UDP-N-acetylmuramate--L-alanine ligase from Leptothrix cholodnii (strain ATCC 51168 / LMG 8142 / SP-6) (Leptothrix discophora (strain SP-6)).